The following is a 340-amino-acid chain: tRNA N6-adenosine threonylcarbamoyltransferase (340 aa).

2 residues coordinate Fe cation: His-113 and His-117. Substrate contacts are provided by residues 135 to 139, Asp-169, Gly-182, Asp-186, and Asn-274; that span reads LVSGG. Position 302 (Asp-302) interacts with Fe cation.

The protein belongs to the KAE1 / TsaD family. Requires Fe(2+) as cofactor.

Its subcellular location is the cytoplasm. The catalysed reaction is L-threonylcarbamoyladenylate + adenosine(37) in tRNA = N(6)-L-threonylcarbamoyladenosine(37) in tRNA + AMP + H(+). Its function is as follows. Required for the formation of a threonylcarbamoyl group on adenosine at position 37 (t(6)A37) in tRNAs that read codons beginning with adenine. Is involved in the transfer of the threonylcarbamoyl moiety of threonylcarbamoyl-AMP (TC-AMP) to the N6 group of A37, together with TsaE and TsaB. TsaD likely plays a direct catalytic role in this reaction. The chain is tRNA N6-adenosine threonylcarbamoyltransferase from Mycobacterium sp. (strain KMS).